A 405-amino-acid chain; its full sequence is Phosphoglycerate kinase (405 aa).

Substrate-binding positions include 21-23 (DFN), R38, 59-62 (HQSR), R116, and R156. Residues E330 and 355–358 (GGHT) each bind ATP.

This sequence belongs to the phosphoglycerate kinase family. Monomer.

The protein localises to the cytoplasm. The catalysed reaction is (2R)-3-phosphoglycerate + ATP = (2R)-3-phospho-glyceroyl phosphate + ADP. The protein operates within carbohydrate degradation; glycolysis; pyruvate from D-glyceraldehyde 3-phosphate: step 2/5. The protein is Phosphoglycerate kinase of Methanocorpusculum labreanum (strain ATCC 43576 / DSM 4855 / Z).